The primary structure comprises 165 residues: Interferon gamma (165 aa).

Positions 1 to 23 are cleaved as a signal peptide; it reads MKYTSYILAFQLCIVLGSLGCYC. Q24 is modified (pyrrolidone carboxylic acid). N-linked (GlcNAc...) asparagine glycans are attached at residues N48 and N120.

It belongs to the type II (or gamma) interferon family. As to quaternary structure, homodimer. Interacts with IFNGR1 (via extracellular domain); this interaction promotes IFNGR1 dimerization. Released primarily from activated T lymphocytes.

The protein resides in the secreted. Type II interferon produced by immune cells such as T-cells and NK cells that plays crucial roles in antimicrobial, antiviral, and antitumor responses by activating effector immune cells and enhancing antigen presentation. Primarily signals through the JAK-STAT pathway after interaction with its receptor IFNGR1 to affect gene regulation. Upon IFNG binding, IFNGR1 intracellular domain opens out to allow association of downstream signaling components JAK2, JAK1 and STAT1, leading to STAT1 activation, nuclear translocation and transcription of IFNG-regulated genes. Many of the induced genes are transcription factors such as IRF1 that are able to further drive regulation of a next wave of transcription. Plays a role in class I antigen presentation pathway by inducing a replacement of catalytic proteasome subunits with immunoproteasome subunits. In turn, increases the quantity, quality, and repertoire of peptides for class I MHC loading. Increases the efficiency of peptide generation also by inducing the expression of activator PA28 that associates with the proteasome and alters its proteolytic cleavage preference. Up-regulates as well MHC II complexes on the cell surface by promoting expression of several key molecules such as cathepsins B/CTSB, H/CTSH, and L/CTSL. Participates in the regulation of hematopoietic stem cells during development and under homeostatic conditions by affecting their development, quiescence, and differentiation. This Macaca fascicularis (Crab-eating macaque) protein is Interferon gamma (IFNG).